A 224-amino-acid chain; its full sequence is Prothoracicotropic hormone (224 aa).

Positions 1–29 (MITRPIILVILCYAILMIVQSFVPKAVAL) are cleaved as a signal peptide. Intrachain disulfides connect C132/C169, C155/C211, and C163/C213. N156 is a glycosylation site (N-linked (GlcNAc...) asparagine).

In terms of assembly, homodimer; disulfide-linked. As to expression, PTTH is synthesized by two dorsolateral neurosecretory cells of the Bombyx brain.

In terms of biological role, PTTH is a brain secretory polypeptide of insects which stimulates the prothoracic glands to produce and release ecdysone, the steroid essential to insect development. Peptides P2K and P6K are presumed to be cleaved post-translationally and may play some unknown physiologically or developmentally important functions. This chain is Prothoracicotropic hormone, found in Bombyx mori (Silk moth).